The primary structure comprises 268 residues: Undecaprenyl-diphosphatase (268 aa).

7 helical membrane passes run 43–63 (FWKTFAVLIQLGAILAILAIY), 85–105 (IGVLVAFLPAVILGLIFGTFI), 108–128 (VLFNPWVVCFSLIAGGAVLLW), 141–161 (AMAFPLPMYLGIGIAQCAAMV), 184–204 (AAEFSFFLAIPTMLGAFVYDV), 217–237 (FIIIVGFVVSFITAIVVVKTF), and 246–266 (FTFFAWWRVIVGTLGLIALAL).

It belongs to the UppP family.

Its subcellular location is the cell inner membrane. The catalysed reaction is di-trans,octa-cis-undecaprenyl diphosphate + H2O = di-trans,octa-cis-undecaprenyl phosphate + phosphate + H(+). In terms of biological role, catalyzes the dephosphorylation of undecaprenyl diphosphate (UPP). Confers resistance to bacitracin. This Afipia carboxidovorans (strain ATCC 49405 / DSM 1227 / KCTC 32145 / OM5) (Oligotropha carboxidovorans) protein is Undecaprenyl-diphosphatase.